A 179-amino-acid polypeptide reads, in one-letter code: Large ribosomal subunit protein uL5 (179 aa).

It belongs to the universal ribosomal protein uL5 family. In terms of assembly, part of the 50S ribosomal subunit; part of the 5S rRNA/L5/L18/L25 subcomplex. Contacts the 5S rRNA and the P site tRNA. Forms a bridge to the 30S subunit in the 70S ribosome.

This is one of the proteins that bind and probably mediate the attachment of the 5S RNA into the large ribosomal subunit, where it forms part of the central protuberance. In the 70S ribosome it contacts protein S13 of the 30S subunit (bridge B1b), connecting the 2 subunits; this bridge is implicated in subunit movement. Contacts the P site tRNA; the 5S rRNA and some of its associated proteins might help stabilize positioning of ribosome-bound tRNAs. This Shewanella woodyi (strain ATCC 51908 / MS32) protein is Large ribosomal subunit protein uL5.